The following is a 162-amino-acid chain: Peptide methionine sulfoxide reductase MsrA (162 aa).

Residue C10 is part of the active site.

Belongs to the MsrA Met sulfoxide reductase family.

The catalysed reaction is L-methionyl-[protein] + [thioredoxin]-disulfide + H2O = L-methionyl-(S)-S-oxide-[protein] + [thioredoxin]-dithiol. It catalyses the reaction [thioredoxin]-disulfide + L-methionine + H2O = L-methionine (S)-S-oxide + [thioredoxin]-dithiol. In terms of biological role, has an important function as a repair enzyme for proteins that have been inactivated by oxidation. Catalyzes the reversible oxidation-reduction of methionine sulfoxide in proteins to methionine. The polypeptide is Peptide methionine sulfoxide reductase MsrA (Clostridium acetobutylicum (strain ATCC 824 / DSM 792 / JCM 1419 / IAM 19013 / LMG 5710 / NBRC 13948 / NRRL B-527 / VKM B-1787 / 2291 / W)).